A 249-amino-acid chain; its full sequence is tRNA 2'-phosphotransferase 1 (249 aa).

Residue M1 is modified to N-acetylmethionine. Disordered stretches follow at residues 1-25 (MNAP…RNVQ) and 220-249 (KPLS…KIQQ).

The protein belongs to the KptA/TPT1 family.

The enzyme catalyses 2'-phospho-[ligated tRNA] + NAD(+) = mature tRNA + ADP-alpha-D-ribose 1'',2''-cyclic phosphate + nicotinamide. Functionally, catalyzes the last step of tRNA splicing, the transfer of the splice junction 2'-phosphate from ligated tRNA to NAD to produce ADP-ribose 1''-2'' cyclic phosphate. The sequence is that of tRNA 2'-phosphotransferase 1 (Trpt1) from Mus musculus (Mouse).